Here is a 128-residue protein sequence, read N- to C-terminus: Ribonuclease pancreatic (128 aa).

Positions 1–13 are enriched in basic and acidic residues; it reads KESPAMKFERQHM. The disordered stretch occupies residues 1-26; it reads KESPAMKFERQHMDSGSTSSSNPTYC. K7 and R10 together coordinate substrate. Residue H12 is the Proton acceptor of the active site. The span at 14 to 26 shows a compositional bias: polar residues; sequence DSGSTSSSNPTYC. 4 disulfide bridges follow: C26–C84, C40–C95, C58–C110, and C65–C72. Residue N34 is glycosylated (N-linked (GlcNAc...) asparagine). Substrate is bound at residue 41–45; that stretch reads KPVNT. The N-linked (GlcNAc...) asparagine glycan is linked to N62. Substrate-binding residues include K66 and R85. The active-site Proton donor is H119.

Belongs to the pancreatic ribonuclease family. Monomer. Interacts with and forms tight 1:1 complexes with RNH1. Dimerization of two such complexes may occur. Interaction with RNH1 inhibits this protein. Pancreas.

Its subcellular location is the secreted. It carries out the reaction an [RNA] containing cytidine + H2O = an [RNA]-3'-cytidine-3'-phosphate + a 5'-hydroxy-ribonucleotide-3'-[RNA].. The catalysed reaction is an [RNA] containing uridine + H2O = an [RNA]-3'-uridine-3'-phosphate + a 5'-hydroxy-ribonucleotide-3'-[RNA].. In terms of biological role, endonuclease that catalyzes the cleavage of RNA on the 3' side of pyrimidine nucleotides. Acts on single-stranded and double-stranded RNA. This is Ribonuclease pancreatic (RNASE1) from Equus caballus (Horse).